The primary structure comprises 246 residues: tRNA pseudouridine synthase A (246 aa).

The active-site Nucleophile is aspartate 52. Tyrosine 111 lines the substrate pocket.

This sequence belongs to the tRNA pseudouridine synthase TruA family. In terms of assembly, homodimer.

It catalyses the reaction uridine(38/39/40) in tRNA = pseudouridine(38/39/40) in tRNA. Its function is as follows. Formation of pseudouridine at positions 38, 39 and 40 in the anticodon stem and loop of transfer RNAs. In Borrelia garinii subsp. bavariensis (strain ATCC BAA-2496 / DSM 23469 / PBi) (Borreliella bavariensis), this protein is tRNA pseudouridine synthase A.